The sequence spans 311 residues: Protein N-terminal asparagine amidohydrolase (311 aa).

As to quaternary structure, monomer.

It localises to the cytoplasm. It carries out the reaction N-terminal L-asparaginyl-[protein] + H2O + H(+) = N-terminal L-aspartyl-[protein] + NH4(+). Its function is as follows. N-terminal asparagine deamidase that mediates deamidation of N-terminal asparagine residues to aspartate. Required for the ubiquitin-dependent turnover of intracellular proteins that initiate with Met-Asn. These proteins are acetylated on the retained initiator methionine and can subsequently be modified by the removal of N-acetyl methionine by acylaminoacid hydrolase (AAH). Conversion of the resulting N-terminal asparagine to aspartate by NTAN1/PNAD renders the protein susceptible to arginylation, polyubiquitination and degradation as specified by the N-end rule. This enzyme does not act on substrates with internal or C-terminal asparagines and does not act on glutamine residues in any position. This is Protein N-terminal asparagine amidohydrolase (NTAN1) from Sus scrofa (Pig).